The chain runs to 436 residues: UBX domain-containing protein 7 (436 aa).

Lys19 participates in a covalent cross-link: Glycyl lysine isopeptide (Lys-Gly) (interchain with G-Cter in ubiquitin). Residues 115–141 are disordered; the sequence is AGESSSRETNPGLAREEKSSRDVHRKN. One can recognise a UBX domain in the interval 212–290; the sequence is LHSSKCVLQI…ELTPRSALLL (79 aa). Over residues 325–346 the composition is skewed to basic and acidic residues; the sequence is DKDPEVTSQREETSKPNRHEVR. Disordered stretches follow at residues 325–357 and 371–436; these read DKDPEVTSQREETSKPNRHEVRSSTPLSGAASS and SSAH…EDKK. A compositionally biased stretch (low complexity) spans 347–357; the sequence is SSTPLSGAASS. Polar residues predominate over residues 371–408; the sequence is SSAHASPMLTPSGTRYPSETNLTTSRSVSPNVFQFVNN. Ser388 is modified (phosphoserine). Residues 426 to 436 are compositionally biased toward basic and acidic residues; sequence HLEKKKDEDKK.

As to quaternary structure, interacts with CDC48.

Its subcellular location is the endoplasmic reticulum. Involved in CDC48-dependent protein degradation through the ubiquitin/proteasome pathway. In Saccharomyces cerevisiae (strain ATCC 204508 / S288c) (Baker's yeast), this protein is UBX domain-containing protein 7 (UBX7).